Here is a 241-residue protein sequence, read N- to C-terminus: Lipoprotein MxiJ (241 aa).

Residues 1–17 (MIRYKGFILFLLLMLIG) form the signal peptide. Residue cysteine 18 is the site of N-palmitoyl cysteine attachment. Cysteine 18 is lipidated: S-diacylglycerol cysteine.

It belongs to the YscJ lipoprotein family.

It is found in the cell outer membrane. In terms of biological role, involved in the secretion of the Ipa antigens. The chain is Lipoprotein MxiJ (mxiJ) from Shigella sonnei.